The primary structure comprises 59 residues: Large ribosomal subunit protein bL32 (59 aa).

The protein belongs to the bacterial ribosomal protein bL32 family.

In Synechococcus sp. (strain RCC307), this protein is Large ribosomal subunit protein bL32.